Reading from the N-terminus, the 701-residue chain is MNPVTKQFQFGQSTVTLETGRIARQATGAVLVTMDDVSVLVTVVGAKSPAEGRDFFPLSVHYQEKTYAAGRIPGGFFKREGRPSEKETLTSRLIDRPIRPLFPEGFMNEVQVVCTVVSTNKKSDPDIAAMIGTSAALAISGIPFAGPIGAARVGFHPEIGYILNPTYEQLQSSSLDMVVAGTEDAVLMVESEADELTEDQMLGAVLFAHDEFQAVIRAVKELAAEAGKPAWDWKAPAENTVLVNAIKAELGEAISQAYTITIKQDRYNRLGELRDQAVALFAGEEEGKFPASEVKDVFGLLEYRTVRENIVNGKPRIDGRDTRTVRPLRIEVGVLGKTHGSALFTRGETQALVVATLGTARDAQLLDTLEGERKDAFMLHYNFPPFSVGECGRMGSPGRREIGHGRLARRGVAAMLPTQDEFPYTIRVVSEITESNGSSSMASVCGASLALMDAGVPVKAPVAGIAMGLVKEGEKFAVLTDILGDEDHLGDMDFKVAGTDKGVTALQMDIKINGITEEIMEIALGQALEARLNILGQMNQVIARPRAELSENAPTMLQMKIDSDKIRDVIGKGGATIRAICEETKASIDIEDDGSVKIYGETKEAAEAAKQRVLAITAEAEIGKIYVGKVERIVDFGAFVNILPGKDGLVHISQISDKRIDKVTDVLQEGQEVKVLVLDVDNRGRIKLSIKDVAAAEASGV.

Mg(2+) is bound by residues aspartate 487 and aspartate 493. One can recognise a KH domain in the interval 554 to 613 (PTMLQMKIDSDKIRDVIGKGGATIRAICEETKASIDIEDDGSVKIYGETKEAAEAAKQRV). An S1 motif domain is found at 623–691 (GKIYVGKVER…NRGRIKLSIK (69 aa)).

It belongs to the polyribonucleotide nucleotidyltransferase family. As to quaternary structure, component of the RNA degradosome, which is a multiprotein complex involved in RNA processing and mRNA degradation. Requires Mg(2+) as cofactor.

The protein resides in the cytoplasm. The catalysed reaction is RNA(n+1) + phosphate = RNA(n) + a ribonucleoside 5'-diphosphate. Functionally, involved in mRNA degradation. Catalyzes the phosphorolysis of single-stranded polyribonucleotides processively in the 3'- to 5'-direction. The polypeptide is Polyribonucleotide nucleotidyltransferase (Pseudomonas paraeruginosa (strain DSM 24068 / PA7) (Pseudomonas aeruginosa (strain PA7))).